The primary structure comprises 354 residues: S-adenosylmethionine:tRNA ribosyltransferase-isomerase (354 aa).

This sequence belongs to the QueA family. As to quaternary structure, monomer.

Its subcellular location is the cytoplasm. It carries out the reaction 7-aminomethyl-7-carbaguanosine(34) in tRNA + S-adenosyl-L-methionine = epoxyqueuosine(34) in tRNA + adenine + L-methionine + 2 H(+). It participates in tRNA modification; tRNA-queuosine biosynthesis. In terms of biological role, transfers and isomerizes the ribose moiety from AdoMet to the 7-aminomethyl group of 7-deazaguanine (preQ1-tRNA) to give epoxyqueuosine (oQ-tRNA). This is S-adenosylmethionine:tRNA ribosyltransferase-isomerase from Salmonella schwarzengrund (strain CVM19633).